Consider the following 94-residue polypeptide: uncharacterized protein (94 aa).

The protein belongs to the phD/YefM antitoxin family.

This is an uncharacterized protein from Synechocystis sp. (strain ATCC 27184 / PCC 6803 / Kazusa).